The chain runs to 185 residues: Ribosome-recycling factor (185 aa).

It belongs to the RRF family.

The protein resides in the cytoplasm. Its function is as follows. Responsible for the release of ribosomes from messenger RNA at the termination of protein biosynthesis. May increase the efficiency of translation by recycling ribosomes from one round of translation to another. The chain is Ribosome-recycling factor from Streptococcus equi subsp. equi (strain 4047).